We begin with the raw amino-acid sequence, 341 residues long: Tetraacyldisaccharide 4'-kinase (341 aa).

54-61 serves as a coordination point for ATP; that stretch reads TVGGAGKT.

This sequence belongs to the LpxK family.

It catalyses the reaction a lipid A disaccharide + ATP = a lipid IVA + ADP + H(+). It functions in the pathway glycolipid biosynthesis; lipid IV(A) biosynthesis; lipid IV(A) from (3R)-3-hydroxytetradecanoyl-[acyl-carrier-protein] and UDP-N-acetyl-alpha-D-glucosamine: step 6/6. Functionally, transfers the gamma-phosphate of ATP to the 4'-position of a tetraacyldisaccharide 1-phosphate intermediate (termed DS-1-P) to form tetraacyldisaccharide 1,4'-bis-phosphate (lipid IVA). This chain is Tetraacyldisaccharide 4'-kinase, found in Brucella anthropi (strain ATCC 49188 / DSM 6882 / CCUG 24695 / JCM 21032 / LMG 3331 / NBRC 15819 / NCTC 12168 / Alc 37) (Ochrobactrum anthropi).